Reading from the N-terminus, the 256-residue chain is Enolase-phosphatase E1 (256 aa).

Mg(2+)-binding residues include Asp14 and Glu16. Substrate-binding positions include Ser142–Ser143 and Lys176. Asp201 contacts Mg(2+).

Belongs to the HAD-like hydrolase superfamily. MasA/MtnC family. Monomer. Requires Mg(2+) as cofactor.

It localises to the cytoplasm. The protein localises to the nucleus. It catalyses the reaction 5-methylsulfanyl-2,3-dioxopentyl phosphate + H2O = 1,2-dihydroxy-5-(methylsulfanyl)pent-1-en-3-one + phosphate. It participates in amino-acid biosynthesis; L-methionine biosynthesis via salvage pathway; L-methionine from S-methyl-5-thio-alpha-D-ribose 1-phosphate: step 3/6. The protein operates within amino-acid biosynthesis; L-methionine biosynthesis via salvage pathway; L-methionine from S-methyl-5-thio-alpha-D-ribose 1-phosphate: step 4/6. In terms of biological role, bifunctional enzyme that catalyzes the enolization of 2,3-diketo-5-methylthiopentyl-1-phosphate (DK-MTP-1-P) into the intermediate 2-hydroxy-3-keto-5-methylthiopentenyl-1-phosphate (HK-MTPenyl-1-P), which is then dephosphorylated to form the acireductone 1,2-dihydroxy-3-keto-5-methylthiopentene (DHK-MTPene). The polypeptide is Enolase-phosphatase E1 (Drosophila simulans (Fruit fly)).